The primary structure comprises 286 residues: CBY1-interacting BAR domain-containing protein 1 (286 aa).

Residues 1–47 (MLRRNLDERDAQTKQLQDAVTNVEKHFGELCQIFAAYVRKTARLRDK) constitute a mitochondrion transit peptide. Residues 10 to 220 (DAQTKQLQDA…NIDEDEDLEV (211 aa)) form a BAR-like region. The stretch at 107–178 (KMKRDDLKAT…IDNFEKQKIK (72 aa)) forms a coiled coil. The interval 258-286 (GQISTCRTRKDQQVEDEDDEELDVTEDEN) is disordered. Positions 271 to 286 (VEDEDDEELDVTEDEN) are enriched in acidic residues.

It belongs to the CIBAR family. Homodimer (via BAR-like domain). Heterodimer with FAM92B (via BAR-like domains). Interacts (via BAR-like domain) with CBY1; this interaction is required for targeting FAM92A to centriole and cilium basal body. Interacts (via BAR-like domain) with CBY3; both proteins form a ninefold symmetric structure at the flagellar base; are recruited to the annulus in a mutually dependent manner and regulate annulus positionning. In terms of tissue distribution, expressed in the heart, liver, spleen, lung, kidney, brain and muscle (at protein level). Strongly expressed throughout the developing limb bud, including the progress zone and the apical ectodermal ridge.

It localises to the cytoplasm. The protein resides in the cytoskeleton. It is found in the microtubule organizing center. The protein localises to the centrosome. Its subcellular location is the centriole. It localises to the cilium basal body. The protein resides in the cell projection. It is found in the cilium. The protein localises to the nucleus. Its subcellular location is the mitochondrion inner membrane. It localises to the flagellum. Functionally, plays a critical role in regulating mitochondrial ultrastructure and function by maintaining the integrity of mitochondrial morphology, particularly the organization of cristae. Preferentially binds to negatively charged phospholipids like cardiolipin and phosphatidylinositol 4,5-bisphosphate enhancing its interaction with mitochondrial membranes. Induces membrane curvature and tubulation, which are critical for maintaining mitochondrial ultrastructure and the organization of cristae. Plays a crucial role in ciliogenesis. May play a role in limb development through its role in ciliogenesis. Plays a key role in the correct positioning of the annulus, a septin-based ring structure in the sperm flagellum, serving both as a physical barrier and a membrane diffusion barrier that separates the midpiece (MP) from the principal piece (PP). This positioning is essential for proper sperm motility and function. Interacts with CBY3 to form a complex which localizes to the curved membrane region of the flagellar pocket. By doing so, may provide stability and rigidity to the periannular membrane to prevent membrane deformation. This function is crucial for halting annulus migration at the proximal end of the fibrous sheath-containing PP. This is CBY1-interacting BAR domain-containing protein 1 from Mus musculus (Mouse).